The chain runs to 313 residues: Olfactory receptor 2B6 (313 aa).

Over 1–25 (MNWVNDSIIQEFILLGFSDRPWLEF) the chain is Extracellular. Residue N5 is glycosylated (N-linked (GlcNAc...) asparagine). A helical transmembrane segment spans residues 26-49 (PLLVVFLISYTVTIFGNLTIILVS). Residues 50–57 (RLDTKLHT) are Cytoplasmic-facing. Residues 58–79 (PMYFFLTNLSLLDLCYTTCTVP) form a helical membrane-spanning segment. Over 80-100 (QMLVNLCSIRKVISYRGCVAQ) the chain is Extracellular. An intrachain disulfide couples C97 to C189. Residues 101 to 120 (LFIFLALGATEYLLLAVMSF) traverse the membrane as a helical segment. At 121–139 (DRFVAICRPLHYSVIMHQR) the chain is on the cytoplasmic side. A helical transmembrane segment spans residues 140–158 (LCLQLAAASWVTGFSNSVW). Residues 159-195 (LSTLTLQLPLCDPYVIDHFLCEVPALLKLSCVETTAN) lie on the Extracellular side of the membrane. A helical membrane pass occupies residues 196–219 (EAELFLVSELFHLIPLTLILISYA). The Cytoplasmic segment spans residues 220–236 (FIVRAVLRIQSAEGRQK). Residues 237–259 (AFGTCGSHLIVVSLFYSTAVSVY) form a helical membrane-spanning segment. At 260–272 (LQPPSPSSKDQGK) the chain is on the extracellular side. A helical transmembrane segment spans residues 273 to 292 (MVSLFYGIIAPMLNPLIYTL). The Cytoplasmic portion of the chain corresponds to 293 to 313 (RNKEVKEGFKRLVARVFLIKK).

This sequence belongs to the G-protein coupled receptor 1 family.

Its subcellular location is the cell membrane. In terms of biological role, odorant receptor. The polypeptide is Olfactory receptor 2B6 (Homo sapiens (Human)).